The following is a 203-amino-acid chain: CASP-like protein 2U2 (203 aa).

A disordered region spans residues M1–A21. Topologically, residues M1–G27 are cytoplasmic. A helical transmembrane segment spans residues A28–V48. At K49–S73 the chain is on the extracellular side. An N-linked (GlcNAc...) asparagine glycan is attached at N51. Residues A74–L94 form a helical membrane-spanning segment. Residues A95–K108 are Cytoplasmic-facing. A helical transmembrane segment spans residues L109–A129. Residues A130–R163 lie on the Extracellular side of the membrane. Residues A164 to A184 traverse the membrane as a helical segment. The Cytoplasmic portion of the chain corresponds to Q185 to I203.

The protein belongs to the Casparian strip membrane proteins (CASP) family. As to quaternary structure, homodimer and heterodimers.

The protein localises to the cell membrane. The protein is CASP-like protein 2U2 of Osmunda lancea (Fern).